The sequence spans 352 residues: MKVKAPGRVNLIGEHTDYNDGFVLPFAIDRYVELEIEESDKFCFYSNNLNEEVKLSSLQKTNSWADYIVGVIKEIEKRGYKIQPVKIKVDSNIPIGAGLSSSAALEVASAYAISEYFGLNLSKIDIVKISREAEANFVGVNCGIMDQFASAFSKKDYAIFLDTMTLDFQFVPLNLKGYEIFVIDSNVKHELSSSEYNLRRQECESALEIIGKDSFRNVTREDLKLLNGGTLLKRVQHILEENERVLKTVKALKENEIERIGEYLYQSHESLRYLYEVSCDETDFIVDFLKEKDGIIGARMVGGGFGGGVIVISKEGSFESIEKLLENEYYSRFGIRPTFYKLNSSDGVTKIK.

Position 14 to 17 (14 to 17 (EHTD)) interacts with substrate. ATP contacts are provided by residues Ser-46 and 96 to 102 (GAGLSSS). Positions 102 and 134 each coordinate Mg(2+). Asp-146 functions as the Proton acceptor in the catalytic mechanism. Tyr-196 is a substrate binding site.

Belongs to the GHMP kinase family. GalK subfamily.

Its subcellular location is the cytoplasm. It carries out the reaction alpha-D-galactose + ATP = alpha-D-galactose 1-phosphate + ADP + H(+). It functions in the pathway carbohydrate metabolism; galactose metabolism. Catalyzes the transfer of the gamma-phosphate of ATP to D-galactose to form alpha-D-galactose-1-phosphate (Gal-1-P). This chain is Galactokinase, found in Thermosipho africanus (strain TCF52B).